The chain runs to 21 residues: Bibrotoxin (21 aa).

2 disulfide bridges follow: Cys-1-Cys-15 and Cys-3-Cys-11.

This sequence belongs to the endothelin/sarafotoxin family. As to expression, expressed by the venom gland.

It localises to the secreted. In terms of biological role, vasoconstrictor activity. These toxins cause cardiac arrest probably as a result of coronary vasospasm. May act by displaying agonistic activities towards endothelin-1 and -2 receptors (EDNRA and EDNRB). The chain is Bibrotoxin from Atractaspis bibronii (Bibron's mole viper).